The sequence spans 512 residues: Serine/threonine-protein kinase BSK1 (512 aa).

A lipid anchor (N-myristoyl glycine) is attached at glycine 2. Residues 8–48 are disordered; the sequence is FSGDNPLGKDGVQPQPLSQNNHGGATTADNGGSGGASGVGG. Over residues 38–48 the composition is skewed to gly residues; that stretch reads GGSGGASGVGG. The region spanning 76 to 331 is the Protein kinase domain; the sequence is DNIVSESGEK…DLVATLAPLQ (256 aa). ATP-binding positions include 82-90 and lysine 104; that span reads SGEKAPNLV. The Proton acceptor role is filled by aspartate 198. Serine 230 carries the phosphoserine modification. Residues 483 to 508 are a coiled coil; the sequence is AKLNMNTDAADMLNEAAQLEEKRQRG.

It belongs to the protein kinase superfamily. Ser/Thr protein kinase family. As to quaternary structure, interacts with BRI1. Interacts with ASK7/BIN2, BSK5, BSK6, BSK8 and BSK11. Interacts with FLS2. Post-translationally, phosphorylated at Ser-230 by BRI1 upon brassinolide (BL) treatment. Phosphorylation at Ser-230 weakens the interaction between BSK1 and BRI1. Phosphorylated by ASK7/BIN2 and ASK9/BIL2.

Its subcellular location is the cell membrane. It catalyses the reaction L-seryl-[protein] + ATP = O-phospho-L-seryl-[protein] + ADP + H(+). The enzyme catalyses L-threonyl-[protein] + ATP = O-phospho-L-threonyl-[protein] + ADP + H(+). In terms of biological role, serine/threonine kinase that acts as a positive regulator of brassinosteroid (BR) signaling downstream of the receptor kinase BRI1. Mediates signal transduction from BRI1 by functioning as substrate of BRI1. Functions as a positive regulator of plant immunity. May be involved in the regulation of pattern-triggered immunity (PTI) downstream of the flagellin receptor FLS2. Possesses kinase activity in vitro. Kinase activity is required for its function in innate immunity. In Arabidopsis thaliana (Mouse-ear cress), this protein is Serine/threonine-protein kinase BSK1.